A 900-amino-acid polypeptide reads, in one-letter code: Probable dipeptidyl-aminopeptidase B (900 aa).

The tract at residues 1–83 (MARTDQGLGA…DILSHPRDKS (83 aa)) is disordered. The Cytoplasmic segment spans residues 1 to 90 (MARTDQGLGA…DKSKRSRGSR (90 aa)). Over residues 24–39 (NSFSSTDSLSTDGSLF) the composition is skewed to low complexity. A compositionally biased stretch (polar residues) spans 44–55 (NATQFQKSTQLP). A helical; Signal-anchor for type II membrane protein transmembrane segment spans residues 91-111 (WIWVIGLLCLGGWILAFILFW). The Vacuolar segment spans residues 112–900 (GRRNNNSDIS…HHVGSALAAT (789 aa)). Residues N150, N195, N348, N410, N514, N639, and N644 are each glycosylated (N-linked (GlcNAc...) asparagine). Residue S753 is the Charge relay system of the active site. N812 carries N-linked (GlcNAc...) asparagine glycosylation. Catalysis depends on charge relay system residues D830 and H863.

The protein belongs to the peptidase S9B family.

Its subcellular location is the vacuole membrane. The catalysed reaction is Release of an N-terminal dipeptide, Xaa-Yaa-|-Zaa-, from a polypeptide, preferentially when Yaa is Pro, provided Zaa is neither Pro nor hydroxyproline.. Functionally, type IV dipeptidyl-peptidase which removes N-terminal dipeptides sequentially from polypeptides having unsubstituted N-termini provided that the penultimate residue is proline. This chain is Probable dipeptidyl-aminopeptidase B (dapB), found in Talaromyces stipitatus (strain ATCC 10500 / CBS 375.48 / QM 6759 / NRRL 1006) (Penicillium stipitatum).